Reading from the N-terminus, the 103-residue chain is Small ribosomal subunit protein uS10 (103 aa).

Belongs to the universal ribosomal protein uS10 family. As to quaternary structure, part of the 30S ribosomal subunit.

In terms of biological role, involved in the binding of tRNA to the ribosomes. The protein is Small ribosomal subunit protein uS10 of Azotobacter vinelandii (strain DJ / ATCC BAA-1303).